Here is a 207-residue protein sequence, read N- to C-terminus: RNA chaperone ProQ (207 aa).

The interval 100–156 is disordered; the sequence is TLAESKAKVQARRKEQAQKARDEEKSKPKTKKAPQQRRANKPQAQKPAKQPVETRAL. Residues 111 to 126 are compositionally biased toward basic and acidic residues; that stretch reads RRKEQAQKARDEEKSK. Residues 127–139 are compositionally biased toward basic residues; that stretch reads PKTKKAPQQRRAN.

This sequence belongs to the ProQ family.

Its subcellular location is the cytoplasm. In terms of biological role, RNA chaperone with significant RNA binding, RNA strand exchange and RNA duplexing activities. The polypeptide is RNA chaperone ProQ (Vibrio vulnificus (strain CMCP6)).